Here is a 118-residue protein sequence, read N- to C-terminus: Immunoglobulin heavy variable 4-30-2 (118 aa).

The N-terminal stretch at 1-19 (MKHLWFFLLLVAAPRWVLS) is a signal peptide. Positions 20–44 (QLQLQESGSGLVKPSQTLSLTCAVS) are framework-1. The 99-residue stretch at 20–118 (QLQLQESGSG…ADTAVYYCAR (99 aa)) folds into the Ig-like domain. Residues cysteine 41 and cysteine 116 are joined by a disulfide bond. The segment at 45 to 54 (GGSISSGGYS) is complementarity-determining-1. Residues 55–71 (WSWIRQPPGKGLEWIGY) are framework-2. The segment at 72-78 (IYHSGST) is complementarity-determining-2. Residues 79–116 (YYNPSLKSRVTISVDRSKNQFSLKLSSVTAADTAVYYC) are framework-3. The interval 117 to 118 (AR) is complementarity-determining-3.

As to quaternary structure, immunoglobulins are composed of two identical heavy chains and two identical light chains; disulfide-linked.

Its subcellular location is the secreted. It is found in the cell membrane. V region of the variable domain of immunoglobulin heavy chains that participates in the antigen recognition. Immunoglobulins, also known as antibodies, are membrane-bound or secreted glycoproteins produced by B lymphocytes. In the recognition phase of humoral immunity, the membrane-bound immunoglobulins serve as receptors which, upon binding of a specific antigen, trigger the clonal expansion and differentiation of B lymphocytes into immunoglobulins-secreting plasma cells. Secreted immunoglobulins mediate the effector phase of humoral immunity, which results in the elimination of bound antigens. The antigen binding site is formed by the variable domain of one heavy chain, together with that of its associated light chain. Thus, each immunoglobulin has two antigen binding sites with remarkable affinity for a particular antigen. The variable domains are assembled by a process called V-(D)-J rearrangement and can then be subjected to somatic hypermutations which, after exposure to antigen and selection, allow affinity maturation for a particular antigen. The protein is Immunoglobulin heavy variable 4-30-2 of Homo sapiens (Human).